The primary structure comprises 144 residues: Large ribosomal subunit protein uL15 (144 aa).

The segment at 1-53 (MRLNTLSPAEGAKHAPKRVGRGIGSGLGKTGGRGHKGQKSRSGGGVRRGFEGG) is disordered. Gly residues predominate over residues 21–31 (RGIGSGLGKTG).

This sequence belongs to the universal ribosomal protein uL15 family. In terms of assembly, part of the 50S ribosomal subunit.

Functionally, binds to the 23S rRNA. This chain is Large ribosomal subunit protein uL15, found in Proteus mirabilis (strain HI4320).